Reading from the N-terminus, the 71-residue chain is Exodeoxyribonuclease 7 small subunit (71 aa).

It belongs to the XseB family. As to quaternary structure, heterooligomer composed of large and small subunits.

It is found in the cytoplasm. The catalysed reaction is Exonucleolytic cleavage in either 5'- to 3'- or 3'- to 5'-direction to yield nucleoside 5'-phosphates.. In terms of biological role, bidirectionally degrades single-stranded DNA into large acid-insoluble oligonucleotides, which are then degraded further into small acid-soluble oligonucleotides. The polypeptide is Exodeoxyribonuclease 7 small subunit (Streptococcus uberis (strain ATCC BAA-854 / 0140J)).